The following is a 270-amino-acid chain: Phosphatidylglycerol--prolipoprotein diacylglyceryl transferase (270 aa).

4 consecutive transmembrane segments (helical) span residues 18–38 (IAVHWYGIIIGLGALLGLWLA), 55–75 (LVLFAIPIAILCARAYYVIFQ), 89–109 (IWNGGLAIHGGLIGAVLTGII), and 115–135 (GLSFWKLADIAAPSILLGQAI). R137 serves as a coordination point for a 1,2-diacyl-sn-glycero-3-phospho-(1'-sn-glycerol). Transmembrane regions (helical) follow at residues 177–197 (QPTFLYESLWSFTGVVVLLLL), 205–225 (GELFLIYVIWYSMGRYFIEGL), and 236–256 (LRIAQVISIVLILCAAALIAY).

This sequence belongs to the Lgt family.

Its subcellular location is the cell membrane. It carries out the reaction L-cysteinyl-[prolipoprotein] + a 1,2-diacyl-sn-glycero-3-phospho-(1'-sn-glycerol) = an S-1,2-diacyl-sn-glyceryl-L-cysteinyl-[prolipoprotein] + sn-glycerol 1-phosphate + H(+). The protein operates within protein modification; lipoprotein biosynthesis (diacylglyceryl transfer). In terms of biological role, catalyzes the transfer of the diacylglyceryl group from phosphatidylglycerol to the sulfhydryl group of the N-terminal cysteine of a prolipoprotein, the first step in the formation of mature lipoproteins. The protein is Phosphatidylglycerol--prolipoprotein diacylglyceryl transferase of Bacillus licheniformis (strain ATCC 14580 / DSM 13 / JCM 2505 / CCUG 7422 / NBRC 12200 / NCIMB 9375 / NCTC 10341 / NRRL NRS-1264 / Gibson 46).